A 145-amino-acid chain; its full sequence is Large ribosomal subunit protein uL16 (145 aa).

Basic residues predominate over residues Met-1 to Ala-21. Residues Met-1–Thr-22 form a disordered region.

Belongs to the universal ribosomal protein uL16 family. In terms of assembly, part of the 50S ribosomal subunit.

Its function is as follows. Binds 23S rRNA and is also seen to make contacts with the A and possibly P site tRNAs. In Desulfitobacterium hafniense (strain Y51), this protein is Large ribosomal subunit protein uL16.